The sequence spans 374 residues: Peptidoglycan recognition protein 4 (374 aa).

The N-terminal stretch at 1–20 (MLSWLLVFSILVLLAQGVSS) is a signal peptide. Residues Asn39, Asn93, and Asn146 are each glycosylated (N-linked (GlcNAc...) asparagine). 2 consecutive N-acetylmuramoyl-L-alanine amidase domains span residues 76–212 (RPVD…KACP) and 233–359 (PAKY…LSPG). 3 disulfides stabilise this stretch: Cys211-Cys333, Cys227-Cys271, and Cys247-Cys253. A peptidoglycan-binding site is contributed by Tyr275. Interaction with murein regions lie at residues 294 to 303 (QGSKTDSYND) and 354 to 355 (NT).

This sequence belongs to the N-acetylmuramoyl-L-alanine amidase 2 family. As to quaternary structure, homodimer; disulfide-linked. Heterodimer with PGLYRP3; disulfide-linked. As to expression, ubiquitous.

It localises to the secreted. Its function is as follows. Pattern receptor that binds to murein peptidoglycans (PGN) of Gram-positive bacteria. Has bactericidal activity towards Gram-positive bacteria. May kill Gram-positive bacteria by interfering with peptidoglycan biosynthesis. Also binds to Gram-negative bacteria, and has bacteriostatic activity towards Gram-negative bacteria. Plays a role in innate immunity. The protein is Peptidoglycan recognition protein 4 (Pglyrp4) of Mus musculus (Mouse).